Consider the following 78-residue polypeptide: Large ribosomal subunit protein eL20 (78 aa).

This sequence belongs to the eukaryotic ribosomal protein eL20 family. As to quaternary structure, part of the 50S ribosomal subunit. Binds 23S rRNA.

This chain is Large ribosomal subunit protein eL20, found in Pyrobaculum arsenaticum (strain DSM 13514 / JCM 11321 / PZ6).